A 238-amino-acid polypeptide reads, in one-letter code: MRPSGRKTDQMRKVSFERNFSKHAEGSCLVKFGDTHVLVTASLEEKTPPWLRNSGKGWVTAEYGMLPRSTNERMKREAASGKQGGRTQEIQRLIGRSLRAVVDLQALGERQISIDCDVIQADGGTRTASITGAWIALHDCLKWMETRNMIKVEKVLKDHIAAISCGIFAKQPVIDLDYLEDSSAETDANFVITGSGGIVEVQGTAEGAPFSEEEFLTLLGLAKAGCSELVALQKQAIA.

Phosphate is bound by residues R86 and 124–126 (GTR).

The protein belongs to the RNase PH family. As to quaternary structure, homohexameric ring arranged as a trimer of dimers.

The enzyme catalyses tRNA(n+1) + phosphate = tRNA(n) + a ribonucleoside 5'-diphosphate. Its function is as follows. Phosphorolytic 3'-5' exoribonuclease that plays an important role in tRNA 3'-end maturation. Removes nucleotide residues following the 3'-CCA terminus of tRNAs; can also add nucleotides to the ends of RNA molecules by using nucleoside diphosphates as substrates, but this may not be physiologically important. Probably plays a role in initiation of 16S rRNA degradation (leading to ribosome degradation) during starvation. The polypeptide is Ribonuclease PH (Agrobacterium fabrum (strain C58 / ATCC 33970) (Agrobacterium tumefaciens (strain C58))).